A 338-amino-acid polypeptide reads, in one-letter code: Ornithine carbamoyltransferase (338 aa).

Residues 56–59 (STRT), Gln83, Arg107, and 134–137 (HPTQ) each bind carbamoyl phosphate. Residues Asn168, Asp232, and 236–237 (SM) contribute to the L-ornithine site. Carbamoyl phosphate is bound by residues 274–275 (CL) and Arg320.

The protein belongs to the aspartate/ornithine carbamoyltransferase superfamily. OTCase family.

It localises to the cytoplasm. It carries out the reaction carbamoyl phosphate + L-ornithine = L-citrulline + phosphate + H(+). It functions in the pathway amino-acid biosynthesis; L-arginine biosynthesis; L-arginine from L-ornithine and carbamoyl phosphate: step 1/3. Its function is as follows. Reversibly catalyzes the transfer of the carbamoyl group from carbamoyl phosphate (CP) to the N(epsilon) atom of ornithine (ORN) to produce L-citrulline. The chain is Ornithine carbamoyltransferase from Photorhabdus laumondii subsp. laumondii (strain DSM 15139 / CIP 105565 / TT01) (Photorhabdus luminescens subsp. laumondii).